A 626-amino-acid polypeptide reads, in one-letter code: MADKSGRLLGGCSFVLDEADCSDLEIDSDDESDKENVPNGQDMCNSFDAEFIDNAPLAQGNTLALFQSQVAQAGKQKVNYLKRKLHLESSELGTVGRAVLQPVNHSTPAAKRRLFECSSSENEVSYAASPAAANTQVFRNQNSGSVGGSSGFGSQASVSQSQQNSNLHLQILKSKNSAACKLAVFKFVYAASFCDLTRPFKNDKTTNYQWVAAVFGVSEELFEASKQLLGRSCTYLHATCRAHEKGSVALLLLSFHVAKSRETVTNLLKNLLNLRAEHMMLQPPKLRGVTSAMFWYKMTLSPNTYTWGQLPRWIEQQILITENSSEVLKFDFSHMVQWALDNEMMDESSIAFHYAQMADHDSNARAWLGLSNQAKIVKDVCTMVHHYQRAIMRSMTMSAYVHKMCERVNVTGSWLVIMQFLKFHGIEPIRFVNALRPWLQGVPKKNCLAFIGPPDTGKSLFTNSLMSFLKGKVLNFANSASHFWLAPLTEAKVALIDDATHACLKYCDTYLRNFFDGYSVCIDRKHKNAVQIKAPPMLLTSNIDIQAEEKYSYLKSRVTCFYFNDKCPLNEDGKPLFQITDPDWKSFFERLWQRLELSDQEEEEEGDENGSRGTFICSTRNSNDFT.

Residues 82–84 (KRK) carry the Nuclear localization signal motif. Residues S90 and S106 each carry the phosphoserine; by host modification. Positions 160–327 (QSQQNSNLHL…ILITENSSEV (168 aa)) are DNA-binding region. An SF3 helicase domain is found at 412-576 (GSWLVIMQFL…CPLNEDGKPL (165 aa)). 452-459 (GPPDTGKS) is an ATP binding site. Residue K533 forms a Glycyl lysine isopeptide (Lys-Gly) (interchain with G-Cter in SUMO) linkage. The segment covering 598-608 (SDQEEEEEGDE) has biased composition (acidic residues). Positions 598 to 626 (SDQEEEEEGDENGSRGTFICSTRNSNDFT) are disordered. The span at 616–626 (ICSTRNSNDFT) shows a compositional bias: polar residues.

This sequence belongs to the papillomaviridae E1 protein family. As to quaternary structure, can form hexamers. Interacts with E2 protein; this interaction increases E1 DNA binding specificity. Interacts with host DNA polymerase subunit POLA2. Interacts with host single stranded DNA-binding protein RPA1. Interacts with host TOP1; this interaction stimulates the enzymatic activity of TOP1. In terms of processing, phosphorylated. Post-translationally, sumoylated.

It localises to the host nucleus. The enzyme catalyses Couples ATP hydrolysis with the unwinding of duplex DNA by translocating in the 3'-5' direction.. It catalyses the reaction ATP + H2O = ADP + phosphate + H(+). ATP-dependent DNA 3'-5' helicase required for initiation of viral DNA replication. It forms a complex with the viral E2 protein. The E1-E2 complex binds to the replication origin which contains binding sites for both proteins. During the initial step, a dimer of E1 interacts with a dimer of protein E2 leading to a complex that binds the viral origin of replication with high specificity. Then, a second dimer of E1 displaces the E2 dimer in an ATP-dependent manner to form the E1 tetramer. Following this, two E1 monomers are added to each half of the site, which results in the formation of two E1 trimers on the viral ori. Subsequently, two hexamers will be created. The double hexamer acts as a bi-directional helicase machinery and unwinds the viral DNA and then recruits the host DNA polymerase to start replication. The polypeptide is Replication protein E1 (Bovine papillomavirus type 5).